The sequence spans 793 residues: Probable exo-1,4-beta-xylosidase xlnD (793 aa).

Positions 1–20 (MPRVASVAAVLAALLPSALG) are cleaved as a signal peptide. 3 N-linked (GlcNAc...) asparagine glycosylation sites follow: Asn23, Asn87, and Asn142. The active site involves Asp310. 11 N-linked (GlcNAc...) asparagine glycosylation sites follow: Asn326, Asn385, Asn404, Asn440, Asn477, Asn518, Asn559, Asn614, Asn652, Asn679, and Asn701.

Belongs to the glycosyl hydrolase 3 family.

The protein resides in the secreted. It catalyses the reaction Hydrolysis of (1-&gt;4)-beta-D-xylans, to remove successive D-xylose residues from the non-reducing termini.. The protein operates within glycan degradation; xylan degradation. Xylan 1,4-beta-xylosidase involved in the hydrolysis of xylan, a major structural heterogeneous polysaccharide found in plant biomass representing the second most abundant polysaccharide in the biosphere, after cellulose. The protein is Probable exo-1,4-beta-xylosidase xlnD (xlnD) of Aspergillus terreus (strain NIH 2624 / FGSC A1156).